The chain runs to 357 residues: Peptide chain release factor 1 (357 aa).

Gln-236 carries the N5-methylglutamine modification.

This sequence belongs to the prokaryotic/mitochondrial release factor family. Methylated by PrmC. Methylation increases the termination efficiency of RF1.

It is found in the cytoplasm. Its function is as follows. Peptide chain release factor 1 directs the termination of translation in response to the peptide chain termination codons UAG and UAA. This chain is Peptide chain release factor 1, found in Mycobacterium marinum (strain ATCC BAA-535 / M).